Reading from the N-terminus, the 497-residue chain is POU domain, class 3, transcription factor 3 (497 aa).

Residues 31-51 (GGGGGGGGGGGGAGGGGGGMQ) are compositionally biased toward gly residues. Disordered regions lie at residues 31-62 (GGGG…SGAY), 121-189 (WSGS…WGAA), 230-316 (NGML…TPTS), and 458-497 (EKRM…TSVQ). 2 stretches are compositionally biased toward pro residues: residues 133–145 (QQPP…PPQG) and 170–180 (HLGPPPPPPHQ). Over residues 240–250 (GGGGGGAGGGA) the composition is skewed to gly residues. Over residues 269-286 (HHHHHHHHAHPHPPHPHH) the composition is skewed to basic residues. Positions 311-385 (EDTPTSDDLE…LLNKWLEEAD (75 aa)) constitute a POU-specific domain. Positions 403-462 (KRKKRTSIEVSVKGALESHFLKCPKPSAQEITNLADSLQLEKEVVRVWFCNRRQKEKRMT) form a DNA-binding region, homeobox. Over residues 465-483 (GIQQQTPDDVYSQVGTVSA) the composition is skewed to polar residues.

Belongs to the POU transcription factor family. Class-3 subfamily. Homodimer. In terms of tissue distribution, brain.

It localises to the nucleus. Functionally, transcription factor that acts synergistically with SOX11 and SOX4. Plays a role in neuronal development. Is implicated in an enhancer activity at the embryonic met-mesencephalic junction; the enhancer element contains the octamer motif (5'-ATTTGCAT-3'). This is POU domain, class 3, transcription factor 3 (Pou3f3) from Rattus norvegicus (Rat).